Here is a 353-residue protein sequence, read N- to C-terminus: Photosystem II protein D1 (353 aa).

Threonine 2 carries the N-acetylthreonine modification. Residue threonine 2 is modified to Phosphothreonine. Transmembrane regions (helical) follow at residues 29 to 46 (YIGWFGVLMIPTLLTATS), 118 to 133 (HFLLGVACYMGREWEL), and 142 to 156 (WIAVAYSAPVAAATA). Residue histidine 118 coordinates chlorophyll a. Tyrosine 126 is a pheophytin a binding site. Residues aspartate 170 and glutamate 189 each coordinate [CaMn4O5] cluster. A helical membrane pass occupies residues 197–218 (FHMLGVAGVFGGSLFSAMHGSL). A chlorophyll a-binding site is contributed by histidine 198. Residues histidine 215 and 264 to 265 (SF) contribute to the a quinone site. Histidine 215 contributes to the Fe cation binding site. A Fe cation-binding site is contributed by histidine 272. The chain crosses the membrane as a helical span at residues 274 to 288 (FLAAWPVVGIWFTAL). Residues histidine 332, glutamate 333, aspartate 342, and alanine 344 each contribute to the [CaMn4O5] cluster site. Positions 345 to 353 (ALEVPYLNG) are excised as a propeptide.

The protein belongs to the reaction center PufL/M/PsbA/D family. PSII is composed of 1 copy each of membrane proteins PsbA, PsbB, PsbC, PsbD, PsbE, PsbF, PsbH, PsbI, PsbJ, PsbK, PsbL, PsbM, PsbT, PsbX, PsbY, PsbZ, Psb30/Ycf12, at least 3 peripheral proteins of the oxygen-evolving complex and a large number of cofactors. It forms dimeric complexes. The D1/D2 heterodimer binds P680, chlorophylls that are the primary electron donor of PSII, and subsequent electron acceptors. It shares a non-heme iron and each subunit binds pheophytin, quinone, additional chlorophylls, carotenoids and lipids. D1 provides most of the ligands for the Mn4-Ca-O5 cluster of the oxygen-evolving complex (OEC). There is also a Cl(-1) ion associated with D1 and D2, which is required for oxygen evolution. The PSII complex binds additional chlorophylls, carotenoids and specific lipids. serves as cofactor. Post-translationally, phosphorylated in both bundle sheath and mesophyll cells, phosphorylation increases when cells are grown under high rather than low light regimes (70 vs 900 umol photons/m-2/s). In terms of processing, PSII is subject to light-induced damage, in particular to D1. Damaged protein is degraded by Deg1 and FtsH proteases and replaced. In maize mesophyll cells D1 degradation is less extensive in grana (stacked) vs stroma (unstacked) lamellae, in part due to exclusion of FtsH from the grana. D1 degradation is faster in bundle sheath cells. Tyr-161 forms a radical intermediate that is referred to as redox-active TyrZ, YZ or Y-Z. Post-translationally, C-terminally processed by CTPA; processing is essential to allow assembly of the oxygen-evolving complex and thus photosynthetic growth.

The protein resides in the plastid. The protein localises to the chloroplast thylakoid membrane. The enzyme catalyses 2 a plastoquinone + 4 hnu + 2 H2O = 2 a plastoquinol + O2. Functionally, photosystem II (PSII) is a light-driven water:plastoquinone oxidoreductase that uses light energy to abstract electrons from H(2)O, generating O(2) and a proton gradient subsequently used for ATP formation. It consists of a core antenna complex that captures photons, and an electron transfer chain that converts photonic excitation into a charge separation. The D1/D2 (PsbA/PsbD) reaction center heterodimer binds P680, the primary electron donor of PSII as well as several subsequent electron acceptors. This chain is Photosystem II protein D1, found in Zea mays (Maize).